The primary structure comprises 201 residues: Glutathione peroxidase 1 (201 aa).

Serine 32 carries the post-translational modification Phosphoserine. Selenocysteine 47 is a catalytic residue. A non-standard amino acid (selenocysteine) is located at residue selenocysteine 47. N6-acetyllysine; alternate occurs at positions 86 and 112. Residues lysine 86 and lysine 112 each carry the N6-succinyllysine; alternate modification. An N6-acetyllysine modification is found at lysine 119. Lysine 146 bears the N6-acetyllysine; alternate mark. Lysine 146 is modified (N6-succinyllysine; alternate). 2 positions are modified to phosphoserine: serine 195 and serine 199.

The protein belongs to the glutathione peroxidase family. As to quaternary structure, homotetramer. Interacts with MIEN1. Post-translationally, during periods of oxidative stress, Sec-47 may react with a superoxide radical, irreversibly lose hydroselenide and be converted to dehydroalanine. As to expression, expressed in liver and lung.

The protein resides in the cytoplasm. It is found in the mitochondrion. It carries out the reaction 2 glutathione + H2O2 = glutathione disulfide + 2 H2O. The catalysed reaction is a hydroperoxy polyunsaturated fatty acid + 2 glutathione = a hydroxy polyunsaturated fatty acid + glutathione disulfide + H2O. The enzyme catalyses tert-butyl hydroperoxide + 2 glutathione = tert-butanol + glutathione disulfide + H2O. It catalyses the reaction cumene hydroperoxide + 2 glutathione = 2-phenylpropan-2-ol + glutathione disulfide + H2O. It carries out the reaction (13S)-hydroperoxy-(9Z,11E)-octadecadienoate + 2 glutathione = (13S)-hydroxy-(9Z,11E)-octadecadienoate + glutathione disulfide + H2O. The catalysed reaction is (9S)-hydroperoxy-(10E,12Z)-octadecadienoate + 2 glutathione = (9S)-hydroxy-(10E,12Z)-octadecadienoate + glutathione disulfide + H2O. The enzyme catalyses (5S)-hydroperoxy-(6E,8Z,11Z,14Z)-eicosatetraenoate + 2 glutathione = (5S)-hydroxy-(6E,8Z,11Z,14Z)-eicosatetraenoate + glutathione disulfide + H2O. It catalyses the reaction (12S)-hydroperoxy-(5Z,8Z,10E,14Z)-eicosatetraenoate + 2 glutathione = (12S)-hydroxy-(5Z,8Z,10E,14Z)-eicosatetraenoate + glutathione disulfide + H2O. It carries out the reaction (12R)-hydroperoxy-(5Z,8Z,10E,14Z)-eicosatetraenoate + 2 glutathione = (12R)-hydroxy-(5Z,8Z,10E,14Z)-eicosatetraenoate + glutathione disulfide + H2O. The catalysed reaction is (15S)-hydroperoxy-(5Z,8Z,11Z,13E)-eicosatetraenoate + 2 glutathione = (15S)-hydroxy-(5Z,8Z,11Z,13E)-eicosatetraenoate + glutathione disulfide + H2O. The enzyme catalyses (5S)-hydroperoxy-(6E,8Z,11Z,14Z,17Z)-eicosapentaenoate + 2 glutathione = (5S)-hydroxy-(6E,8Z,11Z,14Z,17Z)-eicosapentaenoate + glutathione disulfide + H2O. It catalyses the reaction (12S)-hydroperoxy-(5Z,8Z,10E,14Z,17Z)-eicosapentaenoate + 2 glutathione = (12S)-hydroxy-(5Z,8Z,10E,14Z,17Z)-eicosapentaenoate + glutathione disulfide + H2O. It carries out the reaction (15S)-hydroperoxy-(5Z,8Z,11Z,13E,17Z)-eicosapentaenoate + 2 glutathione = (15S)-hydroxy-(5Z,8Z,11Z,13E,17Z)-eicosapentaenoate + glutathione disulfide + H2O. The catalysed reaction is (15S)-hydroperoxy-(11Z,13E)-eicosadienoate + 2 glutathione = (15S)-hydroxy-(11Z,13E)-eicosadienoate + glutathione disulfide + H2O. The enzyme catalyses (17S)-hydroperoxy-(4Z,7Z,10Z,13Z,15E,19Z)-docosahexaenoate + 2 glutathione = (17S)-hydroxy-(4Z,7Z,10Z,13Z,15E,19Z)-docosahexaenoate + glutathione disulfide + H2O. Its function is as follows. Catalyzes the reduction of hydroperoxides in a glutathione-dependent manner thus regulating cellular redox homeostasis. Can reduce small soluble hydroperoxides such as H2O2, cumene hydroperoxide and tert-butyl hydroperoxide, as well as several fatty acid-derived hydroperoxides. In platelets catalyzes the reduction of 12-hydroperoxyeicosatetraenoic acid, the primary product of the arachidonate 12-lipoxygenase pathway. In Rattus norvegicus (Rat), this protein is Glutathione peroxidase 1.